We begin with the raw amino-acid sequence, 1939 residues long: Myosin-6 (1939 aa).

In terms of domain architecture, Myosin N-terminal SH3-like spans 32–81 (DIRTECFVPDDKEEFVKAKILSREGGKVIAETENGKTVTVKEDQVLQQNP). The region spanning 85 to 780 (DKIEDMAMLT…LLGLLEEMRD (696 aa)) is the Myosin motor domain. N6,N6,N6-trimethyllysine is present on K129. Residue 178–185 (GESGAGKT) participates in ATP binding. Position 379 is a phosphothreonine (T379). A Phosphoserine modification is found at S417. Actin-binding regions lie at residues 657–679 (LNKLMTNLRTTHPHFVRCIIPNE) and 759–773 (KFGHTKVFFKAGLLG). The IQ domain maps to 783–812 (LSRIITRMQAQARGQLMRIEFKKIVERRDA). Residues 842-1939 (LKSAETEKEM…GAKQKMHDEE (1098 aa)) adopt a coiled-coil conformation. The residue at position 1139 (S1139) is a Phosphoserine. Position 1261 is a phosphotyrosine (Y1261). At S1271 the chain carries Phosphoserine. Phosphothreonine occurs at positions 1277 and 1284. A Phosphoserine modification is found at S1309. Position 1310 is a phosphotyrosine (Y1310). The residue at position 1311 (T1311) is a Phosphothreonine. S1512 bears the Phosphoserine mark. Position 1515 is a phosphothreonine (T1515). Composition is skewed to basic and acidic residues over residues 1826–1837 (GELEAEQKRNAE) and 1925–1939 (KSRDIGAKQKMHDEE). 2 disordered regions span residues 1826-1849 (GELEAEQKRNAESVKGMRKSERRI) and 1909-1939 (EERADIAESQVNKLRAKSRDIGAKQKMHDEE).

It belongs to the TRAFAC class myosin-kinesin ATPase superfamily. Myosin family. In terms of assembly, muscle myosin is a hexameric protein that consists of 2 heavy chain subunits (MHC), 2 alkali light chain subunits (MLC) and 2 regulatory light chain subunits (MLC-2).

The protein resides in the cytoplasm. It localises to the myofibril. In terms of biological role, muscle contraction. This chain is Myosin-6 (MYH6), found in Homo sapiens (Human).